The following is a 382-amino-acid chain: UDP-4-amino-4-deoxy-L-arabinose--oxoglutarate aminotransferase (382 aa).

Position 183 is an N6-(pyridoxal phosphate)lysine (K183).

The protein belongs to the DegT/DnrJ/EryC1 family. ArnB subfamily. As to quaternary structure, homodimer. Pyridoxal 5'-phosphate serves as cofactor.

It carries out the reaction UDP-4-amino-4-deoxy-beta-L-arabinose + 2-oxoglutarate = UDP-beta-L-threo-pentopyranos-4-ulose + L-glutamate. It participates in nucleotide-sugar biosynthesis; UDP-4-deoxy-4-formamido-beta-L-arabinose biosynthesis; UDP-4-deoxy-4-formamido-beta-L-arabinose from UDP-alpha-D-glucuronate: step 2/3. It functions in the pathway bacterial outer membrane biogenesis; lipopolysaccharide biosynthesis. Functionally, catalyzes the conversion of UDP-4-keto-arabinose (UDP-Ara4O) to UDP-4-amino-4-deoxy-L-arabinose (UDP-L-Ara4N). The modified arabinose is attached to lipid A and is required for resistance to polymyxin and cationic antimicrobial peptides. The protein is UDP-4-amino-4-deoxy-L-arabinose--oxoglutarate aminotransferase of Pseudomonas aeruginosa (strain ATCC 15692 / DSM 22644 / CIP 104116 / JCM 14847 / LMG 12228 / 1C / PRS 101 / PAO1).